Reading from the N-terminus, the 317-residue chain is NAC domain-containing protein 55 (317 aa).

Positions 14-162 constitute an NAC domain; it reads LPPGFRFYPT…DWVLCRIYKK (149 aa). The DNA-binding element occupies 111–168; sequence VGIKKALVFYIGKAPKGTKTNWIMHEYRLIEPSRRNGSTKLDDWVLCRIYKKQTSAQK.

In terms of tissue distribution, expressed in leaves.

The protein localises to the nucleus. Functionally, transcription factors that bind specifically to the 5'-CATGTG-3' motif. This chain is NAC domain-containing protein 55 (NAC055), found in Arabidopsis thaliana (Mouse-ear cress).